Here is a 346-residue protein sequence, read N- to C-terminus: LRP2-binding protein (346 aa).

The TPR repeat unit spans residues alanine 58–alanine 91. Sel1-like repeat units lie at residues isoleucine 92–cysteine 124, phenylalanine 132–asparagine 167, valine 172–serine 205, leucine 206–asparagine 241, valine 242–aspartate 276, and alanine 296–proline 331.

As to quaternary structure, interacts with LRP2.

The protein resides in the cytoplasm. May act as an adapter that regulates LRP2 function. The polypeptide is LRP2-binding protein (Lrp2bp) (Mus musculus (Mouse)).